The following is a 258-amino-acid chain: Lipoprotein-releasing system ATP-binding protein LolD (258 aa).

Residues 5–244 (LQCCQLSKSY…PTSSITDPAN (240 aa)) form the ABC transporter domain. ATP is bound at residue 41 to 48 (GSSGCGKS). The segment at 222 to 258 (LRPLSDNSEQALPPTSSITDPANNIKDNEPQANERHV) is disordered. Residues 226–243 (SDNSEQALPPTSSITDPA) are compositionally biased toward polar residues. A compositionally biased stretch (basic and acidic residues) spans 247–258 (KDNEPQANERHV).

Belongs to the ABC transporter superfamily. Lipoprotein translocase (TC 3.A.1.125) family. The complex is composed of two ATP-binding proteins (LolD) and two transmembrane proteins (LolC and LolE).

Its subcellular location is the cell inner membrane. Its function is as follows. Part of the ABC transporter complex LolCDE involved in the translocation of mature outer membrane-directed lipoproteins, from the inner membrane to the periplasmic chaperone, LolA. Responsible for the formation of the LolA-lipoprotein complex in an ATP-dependent manner. The polypeptide is Lipoprotein-releasing system ATP-binding protein LolD (Colwellia psychrerythraea (strain 34H / ATCC BAA-681) (Vibrio psychroerythus)).